Consider the following 216-residue polypeptide: Potassium-transporting ATPase KdpC subunit (216 aa).

The helical transmembrane segment at 12–32 threads the bilayer; that stretch reads LLGVSLLVFGLLYQGSLMAIG. Residues 197–207 are compositionally biased toward polar residues; that stretch reads QNETDQNSDMN. Residues 197 to 216 are disordered; it reads QNETDQNSDMNASEIANGDH.

It belongs to the KdpC family. The system is composed of three essential subunits: KdpA, KdpB and KdpC. The complex also contains KdpF, a small non-essential subunit.

Its subcellular location is the cell membrane. Functionally, part of the high-affinity ATP-driven potassium transport (or Kdp) system, which catalyzes the hydrolysis of ATP coupled with the electrogenic transport of potassium into the cytoplasm. This subunit acts as a catalytic chaperone that increases the ATP-binding affinity of the ATP-hydrolyzing subunit KdpB by the formation of a transient KdpB/KdpC/ATP ternary complex. The Kdp system is essential for growth under K(+) limitation, and for survival under desiccation and salt crystal inclusion. In Halobacterium salinarum (strain ATCC 29341 / DSM 671 / R1), this protein is Potassium-transporting ATPase KdpC subunit.